Reading from the N-terminus, the 294-residue chain is P32 adhesin (294 aa).

2 helical membrane passes run 11–31 (LVGV…VGLT) and 66–86 (VVGA…GIGI). Repeat copies occupy residues 172-193 (GGPM…PPQM) and 194-214 (GGMP…PPQM). Residues 172–214 (GGPMQPNQMGMRPGFNQMPPQMGGMPPNQMGMRPGFNQMPPQM) form a 2 X 22 AA repeats region. Positions 234–294 (RPGFRPQPGG…AGFPPQNGPR (61 aa)) are disordered. The segment covering 241–256 (PGGGVPMGNKAGGGFN) has biased composition (gly residues).

It is found in the cell projection. The protein resides in the attachment organelle membrane. In terms of biological role, adhesin necessary for successful cytadherence and virulence. The sequence is that of P32 adhesin (mgc2) from Mycoplasmoides gallisepticum (strain R(low / passage 15 / clone 2)) (Mycoplasma gallisepticum).